A 177-amino-acid polypeptide reads, in one-letter code: Large ribosomal subunit protein uL22 (177 aa).

Positions 118–177 (VESRPSREGRRGGAGESAGGARARRAQGSKAAAAKKAPASSSTKAATTTEASEEAKGGSQ) are disordered. A compositionally biased stretch (basic and acidic residues) spans 121–130 (RPSREGRRGG). The segment covering 145–167 (GSKAAAAKKAPASSSTKAATTTE) has biased composition (low complexity).

Belongs to the universal ribosomal protein uL22 family. In terms of assembly, part of the 50S ribosomal subunit.

Its function is as follows. This protein binds specifically to 23S rRNA; its binding is stimulated by other ribosomal proteins, e.g. L4, L17, and L20. It is important during the early stages of 50S assembly. It makes multiple contacts with different domains of the 23S rRNA in the assembled 50S subunit and ribosome. The globular domain of the protein is located near the polypeptide exit tunnel on the outside of the subunit, while an extended beta-hairpin is found that lines the wall of the exit tunnel in the center of the 70S ribosome. This Mycobacterium sp. (strain JLS) protein is Large ribosomal subunit protein uL22.